The sequence spans 220 residues: 7-cyano-7-deazaguanine synthase (220 aa).

7–17 (LSGGMDSSTLA) is an ATP binding site. Positions 187, 195, 198, and 201 each coordinate Zn(2+).

Belongs to the QueC family. Zn(2+) is required as a cofactor.

The catalysed reaction is 7-carboxy-7-deazaguanine + NH4(+) + ATP = 7-cyano-7-deazaguanine + ADP + phosphate + H2O + H(+). The protein operates within purine metabolism; 7-cyano-7-deazaguanine biosynthesis. Catalyzes the ATP-dependent conversion of 7-carboxy-7-deazaguanine (CDG) to 7-cyano-7-deazaguanine (preQ(0)). This Methanospirillum hungatei JF-1 (strain ATCC 27890 / DSM 864 / NBRC 100397 / JF-1) protein is 7-cyano-7-deazaguanine synthase.